The chain runs to 505 residues: Activin receptor type-1B (505 aa).

The first 23 residues, 1 to 23, serve as a signal peptide directing secretion; it reads MAESAGASSFFPLVVLLLAGSGG. Residues 24–126 are Extracellular-facing; the sequence is SGPRGVQALL…EHPSMWGPVE (103 aa). Residue N43 is glycosylated (N-linked (GlcNAc...) asparagine). Residues 127-149 traverse the membrane as a helical segment; the sequence is LVGIIAGPVFLLFLIIIIVFLVI. The Cytoplasmic portion of the chain corresponds to 150-505; it reads NYHQRVYHNR…QLSVQEDVKI (356 aa). Positions 177–206 constitute a GS domain; it reads KTLQDLVYDLSTSGSGSGLPLFVQRTVART. The region spanning 207 to 497 is the Protein kinase domain; it reads IVLQEIIGKG…LRIKKTLSQL (291 aa). ATP-binding positions include 213 to 221 and K234; that span reads IGKGRFGEV. Residue D335 is the Proton acceptor of the active site. Phosphotyrosine is present on Y380.

It belongs to the protein kinase superfamily. TKL Ser/Thr protein kinase family. TGFB receptor subfamily. As to quaternary structure, forms an activin receptor complex with activin receptor type-2 (ACVR2A or ACVR2B). Part of a complex consisting of MAGI2/ARIP1, ACVR2A, ACVR1B and SMAD3. Interacts with SMAD2 and SMAD3. Interacts with SMAD7. Interacts with FKBP1A. Interacts with IGSF1. Interacts with CRIPTO. Interacts with TDP2. Interacts with TSC22D1/TSC-22. The cofactor is Mg(2+). Mn(2+) is required as a cofactor. In terms of processing, autophosphorylated. Phosphorylated by activin receptor type-2 (ACVR2A or ACVR2B) in response to activin-binding at serine and threonine residues in the GS domain. Phosphorylation of ACVR1B by activin receptor type-2 regulates association with SMAD7. Post-translationally, ubiquitinated. Level of ubiquitination is regulated by the SMAD7-SMURF1 complex. Ubiquitinated. As to expression, expressed in many tissues, most strongly in kidney, pancreas, brain, lung, and liver.

Its subcellular location is the cell membrane. The enzyme catalyses L-threonyl-[receptor-protein] + ATP = O-phospho-L-threonyl-[receptor-protein] + ADP + H(+). It carries out the reaction L-seryl-[receptor-protein] + ATP = O-phospho-L-seryl-[receptor-protein] + ADP + H(+). Activin receptor type-2 (ACVR2A or ACVR2B) activates the type-1 receptor through phosphorylation of its regulatory GS domain. Its function is as follows. Transmembrane serine/threonine kinase activin type-1 receptor forming an activin receptor complex with activin receptor type-2 (ACVR2A or ACVR2B). Transduces the activin signal from the cell surface to the cytoplasm and is thus regulating a many physiological and pathological processes including neuronal differentiation and neuronal survival, hair follicle development and cycling, FSH production by the pituitary gland, wound healing, extracellular matrix production, immunosuppression and carcinogenesis. Activin is also thought to have a paracrine or autocrine role in follicular development in the ovary. Within the receptor complex, type-2 receptors (ACVR2A and/or ACVR2B) act as a primary activin receptors whereas the type-1 receptors like ACVR1B act as downstream transducers of activin signals. Activin binds to type-2 receptor at the plasma membrane and activates its serine-threonine kinase. The activated receptor type-2 then phosphorylates and activates the type-1 receptor such as ACVR1B. Once activated, the type-1 receptor binds and phosphorylates the SMAD proteins SMAD2 and SMAD3, on serine residues of the C-terminal tail. Soon after their association with the activin receptor and subsequent phosphorylation, SMAD2 and SMAD3 are released into the cytoplasm where they interact with the common partner SMAD4. This SMAD complex translocates into the nucleus where it mediates activin-induced transcription. Inhibitory SMAD7, which is recruited to ACVR1B through FKBP1A, can prevent the association of SMAD2 and SMAD3 with the activin receptor complex, thereby blocking the activin signal. Activin signal transduction is also antagonized by the binding to the receptor of inhibin-B via the IGSF1 inhibin coreceptor. ACVR1B also phosphorylates TDP2. This chain is Activin receptor type-1B (ACVR1B), found in Homo sapiens (Human).